Reading from the N-terminus, the 355-residue chain is Protein-glutamate methylesterase/protein-glutamine glutaminase (355 aa).

Residues 4-121 (KVLIIDDSAL…ANGMHEYSEM (118 aa)) form the Response regulatory domain. Asp-55 carries the 4-aspartylphosphate modification. The 193-residue stretch at 156–348 (LISSEKLIII…GRVLQYLAAN (193 aa)) folds into the CheB-type methylesterase domain. Catalysis depends on residues Ser-168, His-194, and Asp-290.

This sequence belongs to the CheB family. Post-translationally, phosphorylated by CheA. Phosphorylation of the N-terminal regulatory domain activates the methylesterase activity.

The protein resides in the cytoplasm. The enzyme catalyses [protein]-L-glutamate 5-O-methyl ester + H2O = L-glutamyl-[protein] + methanol + H(+). It catalyses the reaction L-glutaminyl-[protein] + H2O = L-glutamyl-[protein] + NH4(+). Its function is as follows. Involved in chemotaxis. Part of a chemotaxis signal transduction system that modulates chemotaxis in response to various stimuli. Catalyzes the demethylation of specific methylglutamate residues introduced into the chemoreceptors (methyl-accepting chemotaxis proteins or MCP) by CheR. Also mediates the irreversible deamidation of specific glutamine residues to glutamic acid. The polypeptide is Protein-glutamate methylesterase/protein-glutamine glutaminase (Methylobacillus flagellatus (strain ATCC 51484 / DSM 6875 / VKM B-1610 / KT)).